Consider the following 219-residue polypeptide: Small ribosomal subunit protein uS3 (219 aa).

One can recognise a KH type-2 domain in the interval 38 to 106; sequence IRKFIEKRLV…RVHINIVEIK (69 aa).

This sequence belongs to the universal ribosomal protein uS3 family. Part of the 30S ribosomal subunit. Forms a tight complex with proteins S10 and S14.

Its function is as follows. Binds the lower part of the 30S subunit head. Binds mRNA in the 70S ribosome, positioning it for translation. The protein is Small ribosomal subunit protein uS3 of Levilactobacillus brevis (strain ATCC 367 / BCRC 12310 / CIP 105137 / JCM 1170 / LMG 11437 / NCIMB 947 / NCTC 947) (Lactobacillus brevis).